Consider the following 180-residue polypeptide: Translation initiation factor IF-3 (180 aa).

Belongs to the IF-3 family. As to quaternary structure, monomer.

The protein resides in the cytoplasm. Functionally, IF-3 binds to the 30S ribosomal subunit and shifts the equilibrium between 70S ribosomes and their 50S and 30S subunits in favor of the free subunits, thus enhancing the availability of 30S subunits on which protein synthesis initiation begins. The protein is Translation initiation factor IF-3 of Shewanella oneidensis (strain ATCC 700550 / JCM 31522 / CIP 106686 / LMG 19005 / NCIMB 14063 / MR-1).